The following is a 448-amino-acid chain: 4-hydroxybenzoate transporter PcaK (448 aa).

The Cytoplasmic segment spans residues Met1 to Ile30. A helical transmembrane segment spans residues Val31–Ile51. Over Ala52 to Gly67 the chain is Periplasmic. A helical membrane pass occupies residues Pro68–Ala88. Residues Asp89–Lys94 are Cytoplasmic-facing. Residues Leu95–Thr115 traverse the membrane as a helical segment. Residues Asn116 to Gln119 lie on the Periplasmic side of the membrane. A helical membrane pass occupies residues Leu120–Thr140. Over Leu141–Ser152 the chain is Cytoplasmic. The chain crosses the membrane as a helical span at residues Leu153–Ser173. The Periplasmic portion of the chain corresponds to Ala174 to Ser184. A helical membrane pass occupies residues Leu185 to Pro205. Topologically, residues Glu206–Tyr261 are cytoplasmic. Residues Ser262 to Leu282 traverse the membrane as a helical segment. The Periplasmic segment spans residues Thr283–Ala301. The chain crosses the membrane as a helical span at residues Phe302–Met322. Over Asp323–Lys329 the chain is Cytoplasmic. A helical transmembrane segment spans residues Val330–Gly350. Residue Gln351 is a topological domain, periplasmic. Residues Val352–Ala372 form a helical membrane-spanning segment. The Cytoplasmic portion of the chain corresponds to Met373–Arg398. The helical transmembrane segment at Phe399 to Glu419 threads the bilayer. Topologically, residues Gln420–Val421 are periplasmic. Residues Leu422–Val442 form a helical membrane-spanning segment. The Cytoplasmic segment spans residues Ser443–Gly448.

This sequence belongs to the major facilitator superfamily. Aromatic acid:H(+) symporter (AAHS) (TC 2.A.1.15) family.

It localises to the cell inner membrane. Transports 4-hydroxybenzoate (4-HBA) and protocatechuate across the membrane. Driven by the proton motive force. Also functions as a chemoreceptor, which is required for chemotaxis to aromatic acids. In Pseudomonas aeruginosa (strain ATCC 15692 / DSM 22644 / CIP 104116 / JCM 14847 / LMG 12228 / 1C / PRS 101 / PAO1), this protein is 4-hydroxybenzoate transporter PcaK (pcaK).